Consider the following 519-residue polypeptide: Exodeoxyribonuclease 7 large subunit (519 aa).

The tract at residues 493–519 (AISTGKSSNTNRKSAPAREPGKQGSLF) is disordered. A compositionally biased stretch (polar residues) spans 496 to 505 (TGKSSNTNRK).

The protein belongs to the XseA family. As to quaternary structure, heterooligomer composed of large and small subunits.

The protein resides in the cytoplasm. The catalysed reaction is Exonucleolytic cleavage in either 5'- to 3'- or 3'- to 5'-direction to yield nucleoside 5'-phosphates.. Functionally, bidirectionally degrades single-stranded DNA into large acid-insoluble oligonucleotides, which are then degraded further into small acid-soluble oligonucleotides. In Chelativorans sp. (strain BNC1), this protein is Exodeoxyribonuclease 7 large subunit.